The chain runs to 702 residues: ATP-dependent RNA helicase DDX4 (702 aa).

A disordered region spans residues 22 to 228; sequence FEKDKYSSGA…YIPPPPPEDE (207 aa). A compositionally biased stretch (polar residues) spans 29–46; it reads SGANGDTFNRTSASSDIG. Composition is skewed to gly residues over residues 58–68 and 125–137; these read GGFGRGKGFGN and RGSF…GFGL. Composition is skewed to polar residues over residues 141-150 and 195-215; these read NSESDQDQGT and SGKN…SQGP. Phosphoserine is present on residues Ser-195 and Ser-199. Residues 201 to 220 are interaction with RANBP9; it reads KSETEGGESSDSQGPKVTYI. A Q motif motif is present at residues 261 to 289; that stretch reads LTFEEANLCQTLNNNIAKAGYTKLTPVQK. In terms of domain architecture, Helicase ATP-binding spans 292 to 475; that stretch reads IPIVLAGRDL…GDFLKSSYLF (184 aa). 305 to 312 is a binding site for ATP; sequence AQTGSGKT. Positions 419-422 match the DEAD box motif; sequence DEAD. A Helicase C-terminal domain is found at 503 to 648; the sequence is KLVEILRNIG…DVPAWLEEIA (146 aa). A compositionally biased stretch (polar residues) spans 681 to 693; that stretch reads TLNTAGISSSQAP. The interval 681–702 is disordered; the sequence is TLNTAGISSSQAPNPVDDESWD. At Ser-700 the chain carries Phosphoserine.

This sequence belongs to the DEAD box helicase family. DDX4/VASA subfamily. As to quaternary structure, found in a mRNP complex, at least composed of TDRD1, TDRD6, TDRD7 and DDX4. Interacts with RANBP9. Interacts with RANBP10. Interacts with PIWIL2 and MAEL. Interacts with BMAL1 and CLOCK. Interacts with Tex19.1 and, probably, Tex19.2. Interacts with RBM46. As to expression, testis-specific.

It is found in the cytoplasm. The protein resides in the perinuclear region. The enzyme catalyses ATP + H2O = ADP + phosphate + H(+). Functionally, ATP-dependent RNA helicase required during spermatogenesis to repress transposable elements and preventing their mobilization, which is essential for the germline integrity. Acts via the piRNA metabolic process, which mediates the repression of transposable elements during meiosis by forming complexes composed of piRNAs and Piwi proteins and governs the methylation and subsequent repression of transposons. Involved in the secondary piRNAs metabolic process, the production of piRNAs in fetal male germ cells through a ping-pong amplification cycle. Required for PIWIL2 slicing-triggered piRNA biogenesis: helicase activity enables utilization of one of the slice cleavage fragments generated by PIWIL2 and processing these pre-piRNAs into piRNAs. The chain is ATP-dependent RNA helicase DDX4 from Mus musculus (Mouse).